We begin with the raw amino-acid sequence, 124 residues long: Small ribosomal subunit protein eS6 (124 aa).

This sequence belongs to the eukaryotic ribosomal protein eS6 family.

This Methanococcus maripaludis (strain C6 / ATCC BAA-1332) protein is Small ribosomal subunit protein eS6.